Consider the following 94-residue polypeptide: Large ribosomal subunit protein bL27 (94 aa).

The propeptide occupies 1 to 9; sequence MLELNLQLF. The disordered stretch occupies residues 12-33; the sequence is KKGGGSTSNGRDSQAKRLGAKA.

The protein belongs to the bacterial ribosomal protein bL27 family. The N-terminus is cleaved by ribosomal processing cysteine protease Prp.

The polypeptide is Large ribosomal subunit protein bL27 (Lactococcus lactis subsp. lactis (strain IL1403) (Streptococcus lactis)).